We begin with the raw amino-acid sequence, 227 residues long: Testis-expressed protein 30 (227 aa).

The chain is Testis-expressed protein 30 (TEX30) from Homo sapiens (Human).